Consider the following 417-residue polypeptide: Gamma-glutamyl phosphate reductase (417 aa).

This sequence belongs to the gamma-glutamyl phosphate reductase family.

The protein resides in the cytoplasm. The catalysed reaction is L-glutamate 5-semialdehyde + phosphate + NADP(+) = L-glutamyl 5-phosphate + NADPH + H(+). It participates in amino-acid biosynthesis; L-proline biosynthesis; L-glutamate 5-semialdehyde from L-glutamate: step 2/2. Catalyzes the NADPH-dependent reduction of L-glutamate 5-phosphate into L-glutamate 5-semialdehyde and phosphate. The product spontaneously undergoes cyclization to form 1-pyrroline-5-carboxylate. This chain is Gamma-glutamyl phosphate reductase, found in Escherichia coli (strain SMS-3-5 / SECEC).